A 124-amino-acid polypeptide reads, in one-letter code: Apolipoprotein C-IV (124 aa).

The signal sequence occupies residues 1 to 27; sequence MSLLRCRPRDLPSVSLSVLFLVSFVAS. Residue Asn-107 is glycosylated (N-linked (GlcNAc...) asparagine).

The protein belongs to the apolipoprotein C4 family. Expressed by the liver and secreted in plasma.

It localises to the secreted. Functionally, may participate in lipoprotein metabolism. This is Apolipoprotein C-IV (Apoc4) from Mus musculus (Mouse).